Here is a 292-residue protein sequence, read N- to C-terminus: Histamine N-methyltransferase (292 aa).

Glutamate 28 is a substrate binding site. S-adenosyl-L-methionine-binding residues include glycine 60, glutamate 89, glutamine 94, serine 120, and isoleucine 142. Asparagine 283 lines the substrate pocket.

The protein belongs to the class I-like SAM-binding methyltransferase superfamily. HNMT family. Monomer.

Its subcellular location is the cytoplasm. The catalysed reaction is histamine + S-adenosyl-L-methionine = N(tau)-methylhistamine + S-adenosyl-L-homocysteine + H(+). Functionally, inactivates histamine by N-methylation. Plays an important role in degrading histamine and in regulating the airway response to histamine. This Bos taurus (Bovine) protein is Histamine N-methyltransferase (HNMT).